A 448-amino-acid polypeptide reads, in one-letter code: Glucose-6-phosphate isomerase (448 aa).

The active-site Proton donor is the Glu-288. Active-site residues include His-309 and Lys-423.

The protein belongs to the GPI family.

It localises to the cytoplasm. The enzyme catalyses alpha-D-glucose 6-phosphate = beta-D-fructose 6-phosphate. The protein operates within carbohydrate biosynthesis; gluconeogenesis. It functions in the pathway carbohydrate degradation; glycolysis; D-glyceraldehyde 3-phosphate and glycerone phosphate from D-glucose: step 2/4. Its function is as follows. Catalyzes the reversible isomerization of glucose-6-phosphate to fructose-6-phosphate. This chain is Glucose-6-phosphate isomerase, found in Fusobacterium nucleatum subsp. nucleatum (strain ATCC 25586 / DSM 15643 / BCRC 10681 / CIP 101130 / JCM 8532 / KCTC 2640 / LMG 13131 / VPI 4355).